The sequence spans 246 residues: Trypsin V-B (246 aa).

The N-terminal stretch at 1 to 15 is a signal peptide; that stretch reads MKICIFFTLLGTVAA. Positions 16 to 24 are cleaved as a propeptide — activation peptide; the sequence is FPTEDNDDR. One can recognise a Peptidase S1 domain in the interval 25-244; it reads IVGGYTCQEH…YLNWIQQTVA (220 aa). Intrachain disulfides connect Cys-31/Cys-160, Cys-49/Cys-65, Cys-133/Cys-233, Cys-140/Cys-206, Cys-171/Cys-185, and Cys-196/Cys-220. His-64 (charge relay system) is an active-site residue. Ca(2+) contacts are provided by Glu-76, Asn-78, and Glu-86. The Charge relay system role is filled by Asp-108. Residue Ser-200 is the Charge relay system of the active site.

This sequence belongs to the peptidase S1 family. Ca(2+) is required as a cofactor.

The protein resides in the secreted. The protein localises to the extracellular space. The catalysed reaction is Preferential cleavage: Arg-|-Xaa, Lys-|-Xaa.. This chain is Trypsin V-B, found in Rattus norvegicus (Rat).